A 1213-amino-acid chain; its full sequence is DNA-directed RNA polymerase subunit beta (1213 aa).

The interval 1169–1213 is disordered; that stretch reads SRMAEEQEKKKLAEETGKSGDKKENKKDADKPVAPADESDDKVSK. The span at 1171–1199 shows a compositional bias: basic and acidic residues; that stretch reads MAEEQEKKKLAEETGKSGDKKENKKDADK.

This sequence belongs to the RNA polymerase beta chain family. In terms of assembly, the RNAP catalytic core consists of 2 alpha, 1 beta, 1 beta' and 1 omega subunit. When a sigma factor is associated with the core the holoenzyme is formed, which can initiate transcription.

It carries out the reaction RNA(n) + a ribonucleoside 5'-triphosphate = RNA(n+1) + diphosphate. In terms of biological role, DNA-dependent RNA polymerase catalyzes the transcription of DNA into RNA using the four ribonucleoside triphosphates as substrates. This Lactobacillus helveticus (strain DPC 4571) protein is DNA-directed RNA polymerase subunit beta.